The chain runs to 343 residues: Polyprenyl transferase spyF (343 aa).

The next 8 helical transmembrane spans lie at 38-58 (WLAVFSGGVSLPILIGNSHPL), 62-82 (VSVWATLLAGANQIATHPASI), 92-112 (LLCLICGYIFCGAGMVWNDWI), 138-158 (GFIWMMVHVAAMIPVTISTIL), 170-190 (LYIYPQYFLGFSLAWPGAIGW), 241-261 (AYVAAGSRIHMFLVILAGLVL), 273-293 (SGWLWASWMCVWALSFVHQLL), and 311-331 (FALGVWTIVACAAELGLSSGM).

Belongs to the UbiA prenyltransferase family. The cofactor is Mg(2+).

It localises to the membrane. The enzyme catalyses triacetate lactone + (2E,6E,10E)-geranylgeranyl diphosphate = (2E,6E,10E)-geranylgeranyl-triacetate lactone + diphosphate. Its pathway is secondary metabolite biosynthesis; terpenoid biosynthesis. Polyprenyl transferase; part of the gene cluster that mediates the biosynthesis of meroterpenoids called sartorypyrones. Within the pathway, spyF catalyzes the prenylation of triacetic acid lactone (TAL) to produce geranylgeranyl-triacetate lactone. The biosynthesis of sartorypyrones begins with the production of triacetic acid lactone (TAL) by the NR-PKS spyA using one molecule of acetyl-CoA and two molecules of malonyl-CoA. The prenyltransferase spyF then conjugates geranylgeranyl pyrophosphate (GGPP) to TAL to form geranylgeranyl-triacetate lactone, for which the pathway-specific geranylgeranyl pyrophosphate synthase (GGPS) spyE is required to provide GGPP. Subsequently, geranylgeranyl-triacetate lactone is epoxidized at the terminal olein by the FAD-dependent monooxygenase spyC, followed by cyclization of the terpenoid component catalyzed by the terpene cyclase spyD to produce both the bicyclic sartorypyrone F and the monocyclic sartorypyrone D. Finally, the last step of the biosynthesis involves the acetylation of the meroterpenoids sartorypyrones D and F by the acetyltransferase SpyB to produce sartorypyrones A and G, respectively. This Aspergillus fumigatus (strain ATCC MYA-4609 / CBS 101355 / FGSC A1100 / Af293) (Neosartorya fumigata) protein is Polyprenyl transferase spyF.